A 110-amino-acid chain; its full sequence is Large ribosomal subunit protein uL22 (110 aa).

This sequence belongs to the universal ribosomal protein uL22 family. As to quaternary structure, part of the 50S ribosomal subunit.

Functionally, this protein binds specifically to 23S rRNA; its binding is stimulated by other ribosomal proteins, e.g. L4, L17, and L20. It is important during the early stages of 50S assembly. It makes multiple contacts with different domains of the 23S rRNA in the assembled 50S subunit and ribosome. The globular domain of the protein is located near the polypeptide exit tunnel on the outside of the subunit, while an extended beta-hairpin is found that lines the wall of the exit tunnel in the center of the 70S ribosome. The polypeptide is Large ribosomal subunit protein uL22 (Saccharophagus degradans (strain 2-40 / ATCC 43961 / DSM 17024)).